Consider the following 403-residue polypeptide: Phosphoglycerate kinase (403 aa).

Residues 24 to 26 (DLN), Arg-39, 62 to 65 (HLGR), Arg-121, and Arg-161 each bind substrate. Residues Lys-211, Gly-299, Glu-330, and 359 to 362 (GGDS) contribute to the ATP site.

This sequence belongs to the phosphoglycerate kinase family. As to quaternary structure, monomer.

The protein resides in the cytoplasm. The enzyme catalyses (2R)-3-phosphoglycerate + ATP = (2R)-3-phospho-glyceroyl phosphate + ADP. It participates in carbohydrate degradation; glycolysis; pyruvate from D-glyceraldehyde 3-phosphate: step 2/5. The sequence is that of Phosphoglycerate kinase from Corynebacterium jeikeium (strain K411).